Here is a 243-residue protein sequence, read N- to C-terminus: Orotidine 5'-phosphate decarboxylase (243 aa).

Substrate-binding positions include aspartate 19, lysine 41, 69–78 (DLKFFDIPAT), threonine 124, arginine 185, glutamine 194, glycine 214, and arginine 215. Residue lysine 71 is the Proton donor of the active site.

The protein belongs to the OMP decarboxylase family. Type 1 subfamily. In terms of assembly, homodimer.

The enzyme catalyses orotidine 5'-phosphate + H(+) = UMP + CO2. It participates in pyrimidine metabolism; UMP biosynthesis via de novo pathway; UMP from orotate: step 2/2. Its function is as follows. Catalyzes the decarboxylation of orotidine 5'-monophosphate (OMP) to uridine 5'-monophosphate (UMP). This Xanthomonas campestris pv. campestris (strain B100) protein is Orotidine 5'-phosphate decarboxylase.